The primary structure comprises 364 residues: Protein MGF 360-18R (364 aa).

Belongs to the asfivirus MGF 360 family.

Its function is as follows. Plays a role in virus cell tropism, and may be required for efficient virus replication in macrophages. This African swine fever virus (isolate Tick/South Africa/Pretoriuskop Pr4/1996) (ASFV) protein is Protein MGF 360-18R.